A 596-amino-acid chain; its full sequence is Pentatricopeptide repeat-containing protein At1g50270 (596 aa).

12 PPR repeats span residues 66 to 102, 103 to 136, 137 to 167, 168 to 202, 203 to 237, 239 to 269, 270 to 304, 305 to 339, 340 to 370, 371 to 405, 406 to 436, and 442 to 472; these read SIQL…GVIP, SRHT…GLDS, DPFV…AEDK, DVVT…GVAA, NEMT…GRVK, DVFI…MPSR, NVVT…DVAP, NEKT…SIEI, NTTA…LHEK, NVYT…HVSP, NEVT…MKGR, and KADH…MPME. Residues 477-552 form a type E motif region; the sequence is VWGALFGSCL…SPGFSWIEVK (76 aa). Residues 553–584 form a type E(+) motif region; it reads GKLCEFIAFDDKKPLESDDLYKTLDTVGVQMR.

It belongs to the PPR family. PCMP-E subfamily.

This is Pentatricopeptide repeat-containing protein At1g50270 (PCMP-E42) from Arabidopsis thaliana (Mouse-ear cress).